The sequence spans 392 residues: S-adenosylmethionine synthase (392 aa).

His20 lines the ATP pocket. Asp22 is a binding site for Mg(2+). Position 48 (Glu48) interacts with K(+). Residues Glu61 and Gln106 each contribute to the L-methionine site. The flexible loop stretch occupies residues 106–116 (QSRDIINAIEK). ATP is bound by residues 171 to 173 (DSK), Asp248, 254 to 255 (RK), Ala271, and Lys275. L-methionine is bound at residue Asp248. Lys279 is a binding site for L-methionine.

It belongs to the AdoMet synthase family. In terms of assembly, homotetramer; dimer of dimers. Requires Mg(2+) as cofactor. K(+) serves as cofactor.

It localises to the cytoplasm. The catalysed reaction is L-methionine + ATP + H2O = S-adenosyl-L-methionine + phosphate + diphosphate. It participates in amino-acid biosynthesis; S-adenosyl-L-methionine biosynthesis; S-adenosyl-L-methionine from L-methionine: step 1/1. Catalyzes the formation of S-adenosylmethionine (AdoMet) from methionine and ATP. The overall synthetic reaction is composed of two sequential steps, AdoMet formation and the subsequent tripolyphosphate hydrolysis which occurs prior to release of AdoMet from the enzyme. The chain is S-adenosylmethionine synthase from Borreliella burgdorferi (strain ATCC 35210 / DSM 4680 / CIP 102532 / B31) (Borrelia burgdorferi).